A 440-amino-acid polypeptide reads, in one-letter code: Chromosome partition protein MukF (440 aa).

Positions L208–I236 are leucine-zipper.

Belongs to the MukF family. In terms of assembly, interacts, and probably forms a ternary complex, with MukE and MukB via its C-terminal region. The complex formation is stimulated by calcium or magnesium. It is required for an interaction between MukE and MukB.

It is found in the cytoplasm. Its subcellular location is the nucleoid. In terms of biological role, involved in chromosome condensation, segregation and cell cycle progression. May participate in facilitating chromosome segregation by condensation DNA from both sides of a centrally located replisome during cell division. Not required for mini-F plasmid partitioning. Probably acts via its interaction with MukB and MukE. Overexpression results in anucleate cells. It has a calcium binding activity. This Escherichia coli O17:K52:H18 (strain UMN026 / ExPEC) protein is Chromosome partition protein MukF.